Consider the following 275-residue polypeptide: N-acetyltransferase YodP (275 aa).

The N-acetyltransferase domain occupies Phe-125 to Trp-271.

It belongs to the acetyltransferase family.

The catalysed reaction is (3S)-3,6-diaminohexanoate + acetyl-CoA = (3S)-6-acetamido-3-aminohexanoate + CoA + H(+). In terms of biological role, in vitro, is able to catalyze the acetylation of beta-lysine to N6-acetyl-beta-lysine, an archaeal osmolyte produced by methanogenic archaea. Its physiological function has not yet been elucidated. The sequence is that of N-acetyltransferase YodP (yodP) from Bacillus subtilis (strain 168).